The chain runs to 745 residues: Serine/threonine-protein kinase BUR1 (745 aa).

The disordered stretch occupies residues 1–21 (MSVIAGHHVPRSNDQRQYDTP). One can recognise a Protein kinase domain in the interval 44–349 (YEVIEKLGQG…ALDALNHKFF (306 aa)). Residues 50 to 58 (LGQGTFGVV) and Lys73 each bind ATP. The Proton acceptor role is filled by Asp179. 3 stretches are compositionally biased toward basic and acidic residues: residues 380–406 (DKEQAVSELKPPTEIRYDNHSESRYNA), 428–475 (DYID…DIQN), and 493–508 (KLREHSGTESLSKKYD). A disordered region spans residues 380–701 (DKEQAVSELK…EVSDLEEDSD (322 aa)). Positions 516–534 (SRGSKSPSPSKLSSISQSK) are enriched in low complexity. A compositionally biased stretch (basic and acidic residues) spans 547-557 (ASRESSLERKQ). Polar residues-rich tracts occupy residues 558 to 567 (VSNGIRTTTD) and 586 to 598 (LTSNSTQAQPTRN). Basic and acidic residues predominate over residues 599–631 (KSVERPKDLEKPTNGVTEDRNKKPVLEEKKEVV). Residues 632 to 660 (KPNLAIPKIKKSSSLVSLSSRSSTTPVIS) are compositionally biased toward low complexity. Residues 661 to 674 (NPSKVTKRAASSVT) are compositionally biased toward polar residues. The span at 692 to 701 (EVSDLEEDSD) shows a compositional bias: acidic residues.

Belongs to the protein kinase superfamily. CMGC Ser/Thr protein kinase family. CDC2/CDKX subfamily.

The protein resides in the nucleus. It catalyses the reaction L-seryl-[protein] + ATP = O-phospho-L-seryl-[protein] + ADP + H(+). The catalysed reaction is L-threonyl-[protein] + ATP = O-phospho-L-threonyl-[protein] + ADP + H(+). The enzyme catalyses [DNA-directed RNA polymerase] + ATP = phospho-[DNA-directed RNA polymerase] + ADP + H(+). Serine/threonine-protein kinase involved in transcription regulation. Phosphorylates the UBC2/RAD6 ubiquitin-conjugating enzyme (E2), leading to monoubiquitination of histone H2B and the silencing of telomeric-associated genes. Also required for histone H3 methylation. Necessary for the recovery from pheromone-induced growth arrest in the cell cycle G1 phase. Required for pseudohyphal growth and virulence in mice. This is Serine/threonine-protein kinase BUR1 (CRK1) from Candida albicans (strain SC5314 / ATCC MYA-2876) (Yeast).